Consider the following 86-residue polypeptide: MSKGHSLQDPYLNVLRKERIPVSIYLVNGIKLQGQVESFDQFVVLLKNTVSQMVYKHAISTVVPSRPVRVPLLNADGTSAEDENGG.

Residues 9 to 68 (DPYLNVLRKERIPVSIYLVNGIKLQGQVESFDQFVVLLKNTVSQMVYKHAISTVVPSRPV) enclose the Sm domain.

It belongs to the Hfq family. As to quaternary structure, homohexamer.

In terms of biological role, RNA chaperone that binds small regulatory RNA (sRNAs) and mRNAs to facilitate mRNA translational regulation in response to envelope stress, environmental stress and changes in metabolite concentrations. Also binds with high specificity to tRNAs. The chain is RNA-binding protein Hfq from Saccharophagus degradans (strain 2-40 / ATCC 43961 / DSM 17024).